A 124-amino-acid chain; its full sequence is Apolipoprotein C-IV (124 aa).

A signal peptide spans 1–27 (MSLLRCRPRDLPSVSLSVLFLVSFVAS). Asn107 carries N-linked (GlcNAc...) asparagine glycosylation.

It belongs to the apolipoprotein C4 family. In terms of tissue distribution, expressed by the liver and secreted in plasma.

Its subcellular location is the secreted. Its function is as follows. May participate in lipoprotein metabolism. The polypeptide is Apolipoprotein C-IV (Apoc4) (Mus musculus (Mouse)).